The following is a 155-amino-acid chain: MKLHELAPNPGARHERKRVGRGIGSGLGKTSGRGHKGQKARSGGGVRPGFEGGQMPLTRRLPKRGFSNAPFKVRYEVVNVADLERFEAGTVVTPELLDETRVCKNATKGVKVLGTGELTKALTVRAHAVSESARQKIEAAGGKVEVIGEATEEVK.

Residues 1 to 63 (MKLHELAPNP…QMPLTRRLPK (63 aa)) are disordered. Gly residues-rich tracts occupy residues 21-31 (RGIGSGLGKTS) and 42-52 (SGGGVRPGFEG).

It belongs to the universal ribosomal protein uL15 family. As to quaternary structure, part of the 50S ribosomal subunit.

In terms of biological role, binds to the 23S rRNA. This Symbiobacterium thermophilum (strain DSM 24528 / JCM 14929 / IAM 14863 / T) protein is Large ribosomal subunit protein uL15.